The chain runs to 739 residues: Polyribonucleotide nucleotidyltransferase (739 aa).

Asp488 and Asp494 together coordinate Mg(2+). The KH domain maps to 555 to 614; sequence PKIVTLKINPDKIRDVIGPGGKVINGIIDETGVKIDIDQDGTVFIASTDQDGINHARQLI. An S1 motif domain is found at 624–692; that stretch reads GEEFDGTVRR…DKGRVNASHK (69 aa). A disordered region spans residues 698-739; sequence GMSPEDRAAYDEKKKTERDSRPPRRDTGSRPPRDGQRPPRRN. Residues 701–739 show a composition bias toward basic and acidic residues; the sequence is PEDRAAYDEKKKTERDSRPPRRDTGSRPPRDGQRPPRRN.

It belongs to the polyribonucleotide nucleotidyltransferase family. Requires Mg(2+) as cofactor.

The protein resides in the cytoplasm. The catalysed reaction is RNA(n+1) + phosphate = RNA(n) + a ribonucleoside 5'-diphosphate. Its function is as follows. Involved in mRNA degradation. Catalyzes the phosphorolysis of single-stranded polyribonucleotides processively in the 3'- to 5'-direction. This chain is Polyribonucleotide nucleotidyltransferase, found in Exiguobacterium sibiricum (strain DSM 17290 / CCUG 55495 / CIP 109462 / JCM 13490 / 255-15).